We begin with the raw amino-acid sequence, 273 residues long: Orotidine 5'-phosphate decarboxylase (273 aa).

Lysine 96 (proton donor) is an active-site residue.

This sequence belongs to the OMP decarboxylase family. Type 2 subfamily.

The catalysed reaction is orotidine 5'-phosphate + H(+) = UMP + CO2. It participates in pyrimidine metabolism; UMP biosynthesis via de novo pathway; UMP from orotate: step 2/2. The polypeptide is Orotidine 5'-phosphate decarboxylase (Nocardioides sp. (strain ATCC BAA-499 / JS614)).